Reading from the N-terminus, the 451-residue chain is mRNA cleavage and polyadenylation factor CLP1 (451 aa).

Residues Glu33, Lys72, and 133–138 (NTGKTA) contribute to the ATP site.

The protein belongs to the Clp1 family. Clp1 subfamily. In terms of assembly, component of a pre-mRNA cleavage factor complex. Interacts directly with PCF11.

It is found in the nucleus. Functionally, required for endonucleolytic cleavage during polyadenylation-dependent pre-mRNA 3'-end formation. This Vanderwaltozyma polyspora (strain ATCC 22028 / DSM 70294 / BCRC 21397 / CBS 2163 / NBRC 10782 / NRRL Y-8283 / UCD 57-17) (Kluyveromyces polysporus) protein is mRNA cleavage and polyadenylation factor CLP1.